We begin with the raw amino-acid sequence, 145 residues long: D-aminoacyl-tRNA deacylase (145 aa).

The Gly-cisPro motif, important for rejection of L-amino acids motif lies at 137-138 (GP).

The protein belongs to the DTD family. In terms of assembly, homodimer.

The protein resides in the cytoplasm. The catalysed reaction is glycyl-tRNA(Ala) + H2O = tRNA(Ala) + glycine + H(+). It carries out the reaction a D-aminoacyl-tRNA + H2O = a tRNA + a D-alpha-amino acid + H(+). In terms of biological role, an aminoacyl-tRNA editing enzyme that deacylates mischarged D-aminoacyl-tRNAs. Also deacylates mischarged glycyl-tRNA(Ala), protecting cells against glycine mischarging by AlaRS. Acts via tRNA-based rather than protein-based catalysis; rejects L-amino acids rather than detecting D-amino acids in the active site. By recycling D-aminoacyl-tRNA to D-amino acids and free tRNA molecules, this enzyme counteracts the toxicity associated with the formation of D-aminoacyl-tRNA entities in vivo and helps enforce protein L-homochirality. The polypeptide is D-aminoacyl-tRNA deacylase (Teredinibacter turnerae (strain ATCC 39867 / T7901)).